Here is a 204-residue protein sequence, read N- to C-terminus: Urease accessory protein UreG (204 aa).

GTP is bound at residue Gly11–Thr18.

This sequence belongs to the SIMIBI class G3E GTPase family. UreG subfamily. Homodimer. UreD, UreF and UreG form a complex that acts as a GTP-hydrolysis-dependent molecular chaperone, activating the urease apoprotein by helping to assemble the nickel containing metallocenter of UreC. The UreE protein probably delivers the nickel.

It is found in the cytoplasm. In terms of biological role, facilitates the functional incorporation of the urease nickel metallocenter. This process requires GTP hydrolysis, probably effectuated by UreG. In Staphylococcus aureus (strain bovine RF122 / ET3-1), this protein is Urease accessory protein UreG.